A 241-amino-acid polypeptide reads, in one-letter code: 7-cyano-7-deazaguanine synthase (241 aa).

L9–L19 serves as a coordination point for ATP. 4 residues coordinate Zn(2+): C189, C197, C200, and C203.

The protein belongs to the QueC family. Zn(2+) is required as a cofactor.

The catalysed reaction is 7-carboxy-7-deazaguanine + NH4(+) + ATP = 7-cyano-7-deazaguanine + ADP + phosphate + H2O + H(+). Its pathway is purine metabolism; 7-cyano-7-deazaguanine biosynthesis. Its function is as follows. Catalyzes the ATP-dependent conversion of 7-carboxy-7-deazaguanine (CDG) to 7-cyano-7-deazaguanine (preQ(0)). The chain is 7-cyano-7-deazaguanine synthase from Thermoplasma volcanium (strain ATCC 51530 / DSM 4299 / JCM 9571 / NBRC 15438 / GSS1).